The primary structure comprises 1060 residues: Bumetanide-sensitive sodium-(potassium)-chloride cotransporter (1060 aa).

Topologically, residues 1-122 (MNDENRFNVS…KSPTPAVGIK (122 aa)) are cytoplasmic. Helical transmembrane passes span 123–143 (LGWI…VMLF) and 154–174 (GIGL…ITTL). Residues 175-197 (SMSAICTNGEVKGGGIYYIISRS) lie on the Cytoplasmic side of the membrane. Transmembrane regions (helical) follow at residues 198-218 (LGPE…AVAA) and 250-270 (IVGT…MDWE). Over 271-275 (SKAQN) the chain is Cytoplasmic. The next 2 membrane-spanning stretches (helical) occupy residues 276–296 (FLIA…IMGP) and 332–352 (FFSV…GANI). The Cytoplasmic portion of the chain corresponds to 353 to 367 (SGDLKDPASAIPKGT). A helical membrane pass occupies residues 368–388 (LLALLISMVSYTLMVLFAGGG). 3 N-linked (GlcNAc...) asparagine glycosylation sites follow: asparagine 396, asparagine 404, and asparagine 419. A helical transmembrane segment spans residues 432-452 (VMQLMSAWGPFIYGGCWAATL). The Cytoplasmic segment spans residues 453 to 497 (STALTNLLSVPRLIQALGVDRIYPGLIFFSKPYGRHGEPYRGYVL). Transmembrane regions (helical) follow at residues 498–518 (TFFV…APLI) and 563–583 (CVAI…AIFF). Residues 584–642 (TLYLIVHYRRPDVNWGSSTQAQMYKTALSSAHALARTGEHVKNYWPQLLVLAGRPQARP) are Cytoplasmic-facing. A helical transmembrane segment spans residues 643–663 (ALVDLGNLISKAGSLMIVGDI). Asparagine 816 carries an N-linked (GlcNAc...) asparagine glycan. A helical membrane pass occupies residues 882-902 (TLDVWWLYDDGGLTILLPYII). At 903 to 1060 (SQRSAWANCK…NHTSVLTFYS (158 aa)) the chain is on the cytoplasmic side.

It belongs to the SLC12A transporter family.

It is found in the membrane. Functionally, electrically silent transporter system. Mediates sodium and chloride reabsorption. Plays a vital role in the regulation of ionic balance and cell volume. The chain is Bumetanide-sensitive sodium-(potassium)-chloride cotransporter from Manduca sexta (Tobacco hawkmoth).